A 411-amino-acid polypeptide reads, in one-letter code: Putative nickel insertion protein (411 aa).

The protein belongs to the LarC family.

This is Putative nickel insertion protein from Methanothermobacter thermautotrophicus (strain ATCC 29096 / DSM 1053 / JCM 10044 / NBRC 100330 / Delta H) (Methanobacterium thermoautotrophicum).